Consider the following 300-residue polypeptide: Solute carrier family 25 member 35 (300 aa).

Solcar repeat units follow at residues 1–90 (MDFL…AEAG), 100–193 (HSPA…TKDL), and 203–294 (QSWK…LRSL). 6 consecutive transmembrane segments (helical) span residues 38–58 (TYQR…KVDG), 59–79 (LAAL…MNGI), 91–119 (GYLH…GAYL), 169–190 (ALGG…FSST), 205–225 (WKLA…AMAP), and 277–300 (LGPH…TDTK).

Belongs to the mitochondrial carrier (TC 2.A.29) family.

It localises to the mitochondrion inner membrane. It catalyses the reaction a dicarboxylate(in) + sulfate(out) = a dicarboxylate(out) + sulfate(in). Its function is as follows. Putative antiporter that exchanges dicarboxylates and sulfur oxoanions across the inner membrane of mitochondria. This Homo sapiens (Human) protein is Solute carrier family 25 member 35 (SLC25A35).